Consider the following 153-residue polypeptide: Ribonuclease H (153 aa).

Residues 1-142 enclose the RNase H type-1 domain; it reads MTPEVVIYTD…ADALARKGLS (142 aa). Mg(2+) contacts are provided by Asp10, Glu48, Asp70, and Asp134.

The protein belongs to the RNase H family. Monomer. Mg(2+) serves as cofactor.

The protein localises to the cytoplasm. It catalyses the reaction Endonucleolytic cleavage to 5'-phosphomonoester.. Endonuclease that specifically degrades the RNA of RNA-DNA hybrids. The sequence is that of Ribonuclease H from Phenylobacterium zucineum (strain HLK1).